A 1671-amino-acid polypeptide reads, in one-letter code: DENN domain-containing protein Crag (1671 aa).

Residues 39–195 enclose the MABP domain; the sequence is IEPITDIGVY…DVYLCYKKSM (157 aa). The uDENN domain maps to 187 to 364; sequence VYLCYKKSMY…DEVPFPAPSI (178 aa). One can recognise a cDENN domain in the interval 385 to 521; that stretch reads PLPRSGAGFH…AARLLRQTLT (137 aa). Residues 523 to 632 enclose the dDENN domain; that stretch reads LENAKPISYD…ERSFVSDGDH (110 aa). Disordered stretches follow at residues 997–1160, 1245–1311, and 1415–1435; these read QQQQ…PVAS, ANST…RLSE, and VEESEQSDPLQDGKEQIANGN. 2 stretches are compositionally biased toward acidic residues: residues 1011–1023 and 1050–1061; these read GDDDDEDEDEDEY and YEADEEDEDEVD. The span at 1072–1089 shows a compositional bias: polar residues; that stretch reads RVQSPTKISPRTPVTQND. A compositionally biased stretch (low complexity) spans 1100–1119; it reads AASATPTQETQQEQQHSQSQ. A compositionally biased stretch (polar residues) spans 1136 to 1147; that stretch reads RSATFDESTQIG. The span at 1254–1277 shows a compositional bias: basic residues; that stretch reads NGHHPHGLHHGHHHPHHHHHHHSQ. Over residues 1281–1301 the composition is skewed to basic and acidic residues; sequence AEQEEHDAAVHEEGKLRRVSS.

Interacts with Cam. Interacts with Rab10. Interacts (via the DENN domains) with Rab11. In terms of tissue distribution, expressed in the adult head and body.

It localises to the cytoplasm. Its subcellular location is the cell cortex. The protein localises to the early endosome. It is found in the recycling endosome. The protein resides in the cytoplasmic granule. Calmodulin-binding protein that acts as a guanine exchange factor for Rab10 and Rab11. Essential for maintenance of adult photoreceptor cells. Upon light stimulation, required for trafficking of newly synthesized ninaE (Rh1) from the trans-Golgi network to rhabdomere membranes via Rab11-dependent vesicular transport. During egg development, essential for establishing and maintaining epithelial cell polarity by regulating the correct polarized deposition of basal membrane (BM) proteins in follicular epithelial (FE) cells. Functions by targeting Rab10 to the basal cytoplasm, where it restricts the secretion of BM proteins such as trol/Pcan and vkg/Coll IV to the basal surface. Appears to be involved in regulating the levels and distribution of the guanine nucleotide exchange factor strat, however the two proteins appear to have independent roles in regulating polarized BM protein secretion in the FE. The polypeptide is DENN domain-containing protein Crag (Drosophila melanogaster (Fruit fly)).